A 297-amino-acid chain; its full sequence is MNDPVQNSGLVVVDKPAGMTSHDVVSKLRRAFSTRKVGHAGTLDPMATGVLVVGIERGTRFLAHLVATTKAYDATIRLGASTTTDDREGDVVFSADASTLDDEQITTAVTSLTGEIMQKPASVSAIKIDGKRAHERVRDGEVVDIPARPVTVSVFDVLEQRREGGFVDLDVRVHCSSGTYIRSLARDLGAALGVGGHLTALRRTEVGPFTLEDAIPLADLQDNARLSLSLDEALARSYPVLEITEAEGEALSMGKWLEPRGLKGVHAAVTPSGRSIALVEEKGKRLATVFVARPNTL.

Asp-44 acts as the Nucleophile in catalysis.

Belongs to the pseudouridine synthase TruB family. Type 1 subfamily.

It catalyses the reaction uridine(55) in tRNA = pseudouridine(55) in tRNA. Responsible for synthesis of pseudouridine from uracil-55 in the psi GC loop of transfer RNAs. The polypeptide is tRNA pseudouridine synthase B (Corynebacterium efficiens (strain DSM 44549 / YS-314 / AJ 12310 / JCM 11189 / NBRC 100395)).